We begin with the raw amino-acid sequence, 1114 residues long: MFASYLLLVLWIIRLVPTTHAHTGNDAEYLLNTVLKRDATSLSRNAYLDSEATSGATNYCSDCDNDEVIVTVDGTSTIWTILLDSTISTLVTTTSTEKTTLTSCGQSCTKSKDASSVSSSSASSSTSRSLIFRTSTKTVTDTTTLPTVTEINTFTTTDSHIVLVYTDINSESTITGDYTFIKNKNTRTVIITDYVTSTVGGETQIVTQTTTSVVYELVVTCPDHDFATTLTGSETFVPPTTAPKPVETPSPEPSTTILSIKSESSVPSATTSVLDTSITLETSSSSIEFSTSTQESSSIGPSSSSSIGSCTSSSISTEESLSTTKLSSSFTSISSWEELSSSFTQSTTSSNAEPSSSFAESFTTESLSSTIEATSSMEDISNNSVLTSSIFSETTTNESSSYTDEPSSSEEITNTYEPSSSTESSTTDQFSSLLSSSLPVTSTSSTTISSATPITTVLSTSITSQDTNCEATITNISTNTLIETITVNGNTTIYTETQLSTYLTSNTSINCPNTNSATTTTTQVIPTATTEQIHTTTLNGSIIVSTETATLKTTVIITHCPECTNESSTSEYSSSLKAESSQQSIPTIESNLSELSVSSTLSLVESTASGKCSGLTTTTFTSIVSTTTESIYTITSNESTFEMTTTVTNIGTIVITTCPTITPVSSSYSSSESLSSSVSTSLLTESNSTISQSTVSTDKSSLTNDNQISTVSTETPLTSITIIETTSKTTESLYTTTSNDSTHIFTTTIIDVQTNTIVTCPTTTSTLTSSHTSDNEKPASLSSSSLIESDHIADGTTTSTTFQSTSTTTVDHHCSSCSEILLSTSSSIIGNKSTSTSISSIETSASSSYHSSEPEVMSSSSSTSIKQSSDSIPSTSQTHVSTTSSSVSSLETTTTTTENSPTSNGFSSSSIVTSVNVPDYVSSSVSSTSSTTSSPSTESSSNGLVSTVTESSTANENTSEITTIDNTSITSEKVTGTNSNPKTSEIIKDATITTSGNVESLHSTTPISSTSIISTNAISSSDTTTLTITNTLTYSIDSITTMKTSSITTAPPPPQQKESSSVLSSSLIINSSTPTIIPTINIPITFEGNANSLGLKNGDNSWIIGIMMIGLLMI.

Residues 1 to 21 form the signal peptide; the sequence is MFASYLLLVLWIIRLVPTTHA. 2 disordered regions span residues 232–256 and 284–314; these read GSET…PSTT and SSSI…TSSS. Over residues 240–252 the composition is skewed to pro residues; that stretch reads TTAPKPVETPSPE. Asn-382, Asn-397, Asn-475, Asn-490, Asn-506, Asn-539, Asn-565, Asn-591, Asn-637, Asn-687, and Asn-739 each carry an N-linked (GlcNAc...) asparagine glycan. The disordered stretch occupies residues 392-430; it reads SETTTNESSSYTDEPSSSEEITNTYEPSSSTESSTTDQF. The disordered stretch occupies residues 764-784; it reads TSTLTSSHTSDNEKPASLSSS. Residue Asn-831 is glycosylated (N-linked (GlcNAc...) asparagine). Low complexity-rich tracts occupy residues 844–910 and 922–941; these read SASS…SSSS and SSSV…ESSS. Residues 844 to 963 are disordered; it reads SASSSYHSSE…ANENTSEITT (120 aa). A compositionally biased stretch (polar residues) spans 942 to 963; it reads NGLVSTVTESSTANENTSEITT. Asn-957, Asn-966, and Asn-1070 each carry an N-linked (GlcNAc...) asparagine glycan. Asn-1089 carries the GPI-anchor amidated asparagine lipid modification. The propeptide at 1090 to 1114 is removed in mature form; that stretch reads ANSLGLKNGDNSWIIGIMMIGLLMI.

Its subcellular location is the cell membrane. Its function is as follows. Putative adhesin which may be involved in cell adhesion and virulence. Involved in the regulation of filamentous growth. This is Filamentous growth regulator 23 (FGR23) from Candida albicans (strain SC5314 / ATCC MYA-2876) (Yeast).